The sequence spans 353 residues: Photosystem II D2 protein (353 aa).

Threonine 2 carries the post-translational modification N-acetylthreonine. Threonine 2 is modified (phosphothreonine). The helical transmembrane segment at 41–61 (CAYFALGGWFTGTTFVTSWYT) threads the bilayer. Histidine 118 contacts chlorophyll a. Residues 125 to 141 (GFMLRQFEIARSVQLRP) form a helical membrane-spanning segment. Positions 130 and 143 each coordinate pheophytin a. Residues 153–166 (VFVSVFLIYPLGQS) traverse the membrane as a helical segment. Residue histidine 198 participates in chlorophyll a binding. A helical membrane pass occupies residues 208–228 (AALLCAIHGATVENTLFEDGD). Positions 215 and 262 each coordinate a plastoquinone. Histidine 215 contacts Fe cation. Histidine 269 provides a ligand contact to Fe cation. The chain crosses the membrane as a helical span at residues 279-295 (GLWMSALGVVGLALNLR).

The protein belongs to the reaction center PufL/M/PsbA/D family. As to quaternary structure, PSII is composed of 1 copy each of membrane proteins PsbA, PsbB, PsbC, PsbD, PsbE, PsbF, PsbH, PsbI, PsbJ, PsbK, PsbL, PsbM, PsbT, PsbX, PsbY, PsbZ, Psb30/Ycf12, at least 3 peripheral proteins of the oxygen-evolving complex and a large number of cofactors. It forms dimeric complexes. The D1/D2 heterodimer binds P680, chlorophylls that are the primary electron donor of PSII, and subsequent electron acceptors. It shares a non-heme iron and each subunit binds pheophytin, quinone, additional chlorophylls, carotenoids and lipids. There is also a Cl(-1) ion associated with D1 and D2, which is required for oxygen evolution. The PSII complex binds additional chlorophylls, carotenoids and specific lipids. is required as a cofactor.

Its subcellular location is the plastid. It is found in the chloroplast thylakoid membrane. It carries out the reaction 2 a plastoquinone + 4 hnu + 2 H2O = 2 a plastoquinol + O2. Photosystem II (PSII) is a light-driven water:plastoquinone oxidoreductase that uses light energy to abstract electrons from H(2)O, generating O(2) and a proton gradient subsequently used for ATP formation. It consists of a core antenna complex that captures photons, and an electron transfer chain that converts photonic excitation into a charge separation. The D1/D2 (PsbA/PsbD) reaction center heterodimer binds P680, the primary electron donor of PSII as well as several subsequent electron acceptors. D2 is needed for assembly of a stable PSII complex. This Oenothera argillicola (Appalachian evening primrose) protein is Photosystem II D2 protein.